Consider the following 171-residue polypeptide: Protein-export protein SecB (171 aa).

Belongs to the SecB family. As to quaternary structure, homotetramer, a dimer of dimers. One homotetramer interacts with 1 SecA dimer.

The protein resides in the cytoplasm. In terms of biological role, one of the proteins required for the normal export of preproteins out of the cell cytoplasm. It is a molecular chaperone that binds to a subset of precursor proteins, maintaining them in a translocation-competent state. It also specifically binds to its receptor SecA. This Gluconacetobacter diazotrophicus (strain ATCC 49037 / DSM 5601 / CCUG 37298 / CIP 103539 / LMG 7603 / PAl5) protein is Protein-export protein SecB.